Consider the following 363-residue polypeptide: L-arabinitol 4-dehydrogenase (363 aa).

Residues Cys-53, His-78, Glu-79, Cys-108, Cys-111, Cys-114, Cys-122, and Glu-163 each coordinate Zn(2+). Residues 190–191 (PI), Asp-211, Arg-216, Ile-282, and 306–308 (QYR) contribute to the NAD(+) site.

This sequence belongs to the zinc-containing alcohol dehydrogenase family. As to quaternary structure, homotetramer. Zn(2+) is required as a cofactor.

The enzyme catalyses L-arabinitol + NAD(+) = L-xylulose + NADH + H(+). It functions in the pathway carbohydrate degradation; L-arabinose degradation via L-arabinitol; D-xylulose 5-phosphate from L-arabinose (fungal route): step 2/5. Its function is as follows. Catalyzes the NAD-dependent oxidation of L-arabinitol to L-xylulose in the fungal L-arabinose catabolic pathway. L-arabinose catabolism is important for using plant material as a carbon source. Not active on D-arabinitol, D-sorbitol and D-mannitol. The protein is L-arabinitol 4-dehydrogenase (ard-1) of Neurospora crassa (strain ATCC 24698 / 74-OR23-1A / CBS 708.71 / DSM 1257 / FGSC 987).